Reading from the N-terminus, the 284-residue chain is Phosphonates import ATP-binding protein PhnC 1 (284 aa).

One can recognise an ABC transporter domain in the interval 5–253 (IEVRGLSKSF…MLRDLYGSEA (249 aa)). Residue 38 to 45 (GASGSGKS) coordinates ATP.

This sequence belongs to the ABC transporter superfamily. Phosphonates importer (TC 3.A.1.9.1) family. As to quaternary structure, the complex is composed of two ATP-binding proteins (PhnC), two transmembrane proteins (PhnE) and a solute-binding protein (PhnD).

It is found in the cell inner membrane. The enzyme catalyses phosphonate(out) + ATP + H2O = phosphonate(in) + ADP + phosphate + H(+). Functionally, part of the ABC transporter complex PhnCDE involved in phosphonates import. Responsible for energy coupling to the transport system. The polypeptide is Phosphonates import ATP-binding protein PhnC 1 (Cupriavidus metallidurans (strain ATCC 43123 / DSM 2839 / NBRC 102507 / CH34) (Ralstonia metallidurans)).